Here is a 437-residue protein sequence, read N- to C-terminus: UDP-N-acetylmuramoylalanine--D-glutamate ligase (437 aa).

Residue 112–118 (GSNGKST) coordinates ATP.

This sequence belongs to the MurCDEF family.

It localises to the cytoplasm. It carries out the reaction UDP-N-acetyl-alpha-D-muramoyl-L-alanine + D-glutamate + ATP = UDP-N-acetyl-alpha-D-muramoyl-L-alanyl-D-glutamate + ADP + phosphate + H(+). It functions in the pathway cell wall biogenesis; peptidoglycan biosynthesis. Its function is as follows. Cell wall formation. Catalyzes the addition of glutamate to the nucleotide precursor UDP-N-acetylmuramoyl-L-alanine (UMA). In Haemophilus influenzae (strain 86-028NP), this protein is UDP-N-acetylmuramoylalanine--D-glutamate ligase.